Consider the following 206-residue polypeptide: Small ribosomal subunit protein uS4 (206 aa).

The S4 RNA-binding domain occupies 96-161; it reads RRLDNVVYRM…QGRIQAALAL (66 aa).

The protein belongs to the universal ribosomal protein uS4 family. As to quaternary structure, part of the 30S ribosomal subunit. Contacts protein S5. The interaction surface between S4 and S5 is involved in control of translational fidelity.

Functionally, one of the primary rRNA binding proteins, it binds directly to 16S rRNA where it nucleates assembly of the body of the 30S subunit. In terms of biological role, with S5 and S12 plays an important role in translational accuracy. The chain is Small ribosomal subunit protein uS4 from Legionella pneumophila (strain Corby).